The chain runs to 324 residues: NADH-ubiquinone oxidoreductase chain 1 (324 aa).

A run of 8 helical transmembrane segments spans residues 5–25, 75–95, 106–126, 146–166, 177–197, 228–248, 259–279, and 299–319; these read ILLY…ATAF, FLFL…WMPL, LGLL…LGSG, ISYE…TGGF, TVWL…STLA, LFFL…VILF, QIST…FLWI, and FLPL…ATAS.

It belongs to the complex I subunit 1 family.

The protein resides in the mitochondrion inner membrane. The enzyme catalyses a ubiquinone + NADH + 5 H(+)(in) = a ubiquinol + NAD(+) + 4 H(+)(out). Functionally, core subunit of the mitochondrial membrane respiratory chain NADH dehydrogenase (Complex I) that is believed to belong to the minimal assembly required for catalysis. Complex I functions in the transfer of electrons from NADH to the respiratory chain. The immediate electron acceptor for the enzyme is believed to be ubiquinone. The protein is NADH-ubiquinone oxidoreductase chain 1 (MT-ND1) of Squalus acanthias (Spiny dogfish).